The sequence spans 684 residues: Homoaconitase, mitochondrial (684 aa).

Residues Cys-337, Cys-397, and Cys-400 each coordinate [4Fe-4S] cluster.

It belongs to the aconitase/IPM isomerase family. [4Fe-4S] cluster serves as cofactor.

The protein localises to the mitochondrion. The enzyme catalyses (2R,3S)-homoisocitrate = cis-homoaconitate + H2O. The protein operates within amino-acid biosynthesis; L-lysine biosynthesis via AAA pathway; L-alpha-aminoadipate from 2-oxoglutarate: step 3/5. Functionally, catalyzes the reversible hydration of cis-homoaconitate to (2R,3S)-homoisocitrate, a step in the alpha-aminoadipate pathway for lysine biosynthesis. The protein is Homoaconitase, mitochondrial (LYS4) of Candida albicans (strain SC5314 / ATCC MYA-2876) (Yeast).